The chain runs to 77 residues: Large ribosomal subunit protein bL28 (77 aa).

The tract at residues 1 to 26 (MARVCKVTGKRPMSGNNVSHANNKTK) is disordered.

This sequence belongs to the bacterial ribosomal protein bL28 family.

This Neisseria gonorrhoeae (strain ATCC 700825 / FA 1090) protein is Large ribosomal subunit protein bL28.